The chain runs to 239 residues: 7-cyano-7-deazaguanine synthase (239 aa).

13–23 (LSGGLDSMVTA) serves as a coordination point for ATP. Zn(2+)-binding residues include C193, C203, C206, and C209.

It belongs to the QueC family. Zn(2+) is required as a cofactor.

The catalysed reaction is 7-carboxy-7-deazaguanine + NH4(+) + ATP = 7-cyano-7-deazaguanine + ADP + phosphate + H2O + H(+). The protein operates within purine metabolism; 7-cyano-7-deazaguanine biosynthesis. Its function is as follows. Catalyzes the ATP-dependent conversion of 7-carboxy-7-deazaguanine (CDG) to 7-cyano-7-deazaguanine (preQ(0)). This chain is 7-cyano-7-deazaguanine synthase, found in Erythrobacter litoralis (strain HTCC2594).